The primary structure comprises 222 residues: Glutathione S-transferase alpha-2 (222 aa).

The GST N-terminal domain maps to 3-83; that stretch reads GKPVLHYFNA…YIATKYDLYG (81 aa). An N6-succinyllysine modification is found at lysine 4. Glutathione-binding positions include tyrosine 9, lysine 45, 54 to 55, and 67 to 68; these read QV and QT. Positions 85–208 constitute a GST C-terminal domain; it reads DMKERALIDM…QPGSQRKPAM (124 aa).

It belongs to the GST superfamily. Alpha family. In terms of assembly, homodimer or heterodimer of GSTA1 and GSTA2.

Its subcellular location is the cytoplasm. The catalysed reaction is RX + glutathione = an S-substituted glutathione + a halide anion + H(+). Its function is as follows. Catalyzes the conjugation of glutathione to a large variety of electrophilic compounds. In Rattus norvegicus (Rat), this protein is Glutathione S-transferase alpha-2 (Gsta2).